The primary structure comprises 307 residues: Thioredoxin reductase (307 aa).

An FAD-binding site is contributed by 34 to 41; it reads ESKAHGGQ. A disulfide bridge links Cys134 with Cys137. 275-284 contacts FAD; the sequence is DVRAKSFRQV.

The protein belongs to the class-II pyridine nucleotide-disulfide oxidoreductase family. Homodimer. FAD is required as a cofactor.

It is found in the cytoplasm. The catalysed reaction is [thioredoxin]-dithiol + NADP(+) = [thioredoxin]-disulfide + NADPH + H(+). This is Thioredoxin reductase (trxB) from Treponema pallidum (strain Nichols).